Consider the following 224-residue polypeptide: Deoxyribose-phosphate aldolase (224 aa).

The active-site Proton donor/acceptor is Asp-92. The active-site Schiff-base intermediate with acetaldehyde is Lys-154. Catalysis depends on Lys-183, which acts as the Proton donor/acceptor.

It belongs to the DeoC/FbaB aldolase family. DeoC type 1 subfamily.

It localises to the cytoplasm. It catalyses the reaction 2-deoxy-D-ribose 5-phosphate = D-glyceraldehyde 3-phosphate + acetaldehyde. Its pathway is carbohydrate degradation; 2-deoxy-D-ribose 1-phosphate degradation; D-glyceraldehyde 3-phosphate and acetaldehyde from 2-deoxy-alpha-D-ribose 1-phosphate: step 2/2. Catalyzes a reversible aldol reaction between acetaldehyde and D-glyceraldehyde 3-phosphate to generate 2-deoxy-D-ribose 5-phosphate. The protein is Deoxyribose-phosphate aldolase of Actinobacillus succinogenes (strain ATCC 55618 / DSM 22257 / CCUG 43843 / 130Z).